A 159-amino-acid polypeptide reads, in one-letter code: 6,7-dimethyl-8-ribityllumazine synthase (159 aa).

5-amino-6-(D-ribitylamino)uracil is bound by residues tryptophan 28, 59–61 (ALE), and 81–83 (CVI). 86-87 (GT) contributes to the (2S)-2-hydroxy-3-oxobutyl phosphate binding site. Histidine 89 acts as the Proton donor in catalysis. 5-amino-6-(D-ribitylamino)uracil is bound at residue asparagine 114. Arginine 128 contacts (2S)-2-hydroxy-3-oxobutyl phosphate.

This sequence belongs to the DMRL synthase family.

The enzyme catalyses (2S)-2-hydroxy-3-oxobutyl phosphate + 5-amino-6-(D-ribitylamino)uracil = 6,7-dimethyl-8-(1-D-ribityl)lumazine + phosphate + 2 H2O + H(+). It participates in cofactor biosynthesis; riboflavin biosynthesis; riboflavin from 2-hydroxy-3-oxobutyl phosphate and 5-amino-6-(D-ribitylamino)uracil: step 1/2. Functionally, catalyzes the formation of 6,7-dimethyl-8-ribityllumazine by condensation of 5-amino-6-(D-ribitylamino)uracil with 3,4-dihydroxy-2-butanone 4-phosphate. This is the penultimate step in the biosynthesis of riboflavin. The protein is 6,7-dimethyl-8-ribityllumazine synthase of Corynebacterium kroppenstedtii (strain DSM 44385 / JCM 11950 / CIP 105744 / CCUG 35717).